The sequence spans 308 residues: N-acetylgalactosamine kinase AgaK (308 aa).

Residues 4–11 and 132–139 contribute to the ATP site; these read GLDIGGTK and GTGGGLCI. Positions 156, 174, 176, and 181 each coordinate Zn(2+).

Belongs to the ROK (NagC/XylR) family.

The protein resides in the cytoplasm. The catalysed reaction is N-acetyl-D-galactosamine + ATP = N-acetyl-D-galactosamine 6-phosphate + ADP + H(+). It catalyses the reaction N-acetyl-D-glucosamine + ATP = N-acetyl-D-glucosamine 6-phosphate + ADP + H(+). Involved in the pathway of N-acetyl-D-galactosamine degradation. Catalyzes the phosphorylation of N-acetyl-D-galactosamine (GalNAc) to yield D-galactosamine 6-phosphate (GalN-6-P). It can also phosphorylate N-acetylglucosamine (GlcNAc). The polypeptide is N-acetylgalactosamine kinase AgaK (Shewanella sp. (strain ANA-3)).